The primary structure comprises 434 residues: Bestrophin homolog 12 (434 aa).

4 helical membrane passes run 31 to 51 (KVIL…FLVF), 76 to 96 (VCIP…DQWE), 244 to 264 (IPIP…YFFF), and 278 to 298 (WALS…FLVG).

This sequence belongs to the anion channel-forming bestrophin (TC 1.A.46) family. Calcium-sensitive chloride channel subfamily. In terms of assembly, forms oligomers.

It is found in the cell membrane. Forms chloride channels. This is Bestrophin homolog 12 (best-12) from Caenorhabditis elegans.